The chain runs to 138 residues: Thyrotropin subunit beta (138 aa).

The signal sequence occupies residues M1–S20. 6 disulfides stabilise this stretch: C22/C72, C36/C87, C39/C125, C47/C103, C51/C105, and C108/C115. N43 carries N-linked (GlcNAc...) asparagine glycosylation. Positions V133–I138 are excised as a propeptide.

Belongs to the glycoprotein hormones subunit beta family. Heterodimer of a common alpha chain and a unique beta chain which confers biological specificity to thyrotropin, lutropin, follitropin and gonadotropin.

Its subcellular location is the secreted. Functionally, indispensable for the control of thyroid structure and metabolism. The sequence is that of Thyrotropin subunit beta (TSHB) from Lama glama (Llama).